A 117-amino-acid polypeptide reads, in one-letter code: Large ribosomal subunit protein eL34 (117 aa).

S12 carries the post-translational modification Phosphoserine. N6-acetyllysine is present on residues K36 and K43. K108 is covalently cross-linked (Glycyl lysine isopeptide (Lys-Gly) (interchain with G-Cter in SUMO2)).

The protein belongs to the eukaryotic ribosomal protein eL34 family. Component of the large ribosomal subunit.

Its subcellular location is the cytoplasm. The protein resides in the cytosol. It localises to the endoplasmic reticulum. Its function is as follows. Component of the large ribosomal subunit. The ribosome is a large ribonucleoprotein complex responsible for the synthesis of proteins in the cell. The sequence is that of Large ribosomal subunit protein eL34 (RPL34) from Sus scrofa (Pig).